The chain runs to 264 residues: uncharacterized protein (264 aa).

A divalent metal cation-binding residues include His-5, His-7, Glu-93, His-134, His-158, and Asp-208.

Belongs to the metallo-dependent hydrolases superfamily. TatD-type hydrolase family. The cofactor is a divalent metal cation.

This is an uncharacterized protein from Mycobacterium tuberculosis (strain ATCC 25618 / H37Rv).